A 308-amino-acid chain; its full sequence is Sulfoquinovosyl glycerol transport system permease protein SmoG (308 aa).

6 helical membrane passes run 28–48, 92–112, 126–146, 164–184, 223–243, and 279–299; these read LAVLLLAPAAILLSLIIVYPV, VLITLITVPGALFMGLGLALL, SLLIPWALPLSFAGLIFAWFF, GIIWFNSPNWAFAAICLTIIW, ITLPLLKPSIVVALIFRTITA, and LGYGSALAVVMFALSMCVTAV. One can recognise an ABC transmembrane type-1 domain in the interval 88–300; sequence TWNTVLITLI…ALSMCVTAVY (213 aa).

The protein belongs to the binding-protein-dependent transport system permease family. The complex is probably composed of two ATP-binding proteins (SmoE), two transmembrane proteins (SmoG and SmoH) and a solute-binding protein (SmoF).

The protein localises to the cell inner membrane. In terms of biological role, part of the ABC transporter complex SmoEFGH involved in sulfoquinovosyl glycerol (SQGro) uptake. Responsible for the translocation of the substrate across the membrane. This chain is Sulfoquinovosyl glycerol transport system permease protein SmoG, found in Agrobacterium fabrum (strain C58 / ATCC 33970) (Agrobacterium tumefaciens (strain C58)).